The primary structure comprises 120 residues: UPF0102 protein Pfl01_4685 (120 aa).

Belongs to the UPF0102 family.

This is UPF0102 protein Pfl01_4685 from Pseudomonas fluorescens (strain Pf0-1).